A 335-amino-acid chain; its full sequence is Phospho-N-acetylmuramoyl-pentapeptide-transferase (335 aa).

A run of 10 helical transmembrane segments spans residues 3–23, 53–73, 78–98, 118–138, 143–163, 174–194, 200–220, 226–246, 251–271, and 314–334; these read LTIL…PHFI, GGTV…LVYF, SLGL…IGFL, FTLQ…PSGI, VFGY…FWVV, GIDG…GVIA, FDVL…FLFN, IFMG…ISIA, WTLL…MLQV, and VDAF…AILY.

It belongs to the glycosyltransferase 4 family. MraY subfamily. It depends on Mg(2+) as a cofactor.

It is found in the cell membrane. It carries out the reaction UDP-N-acetyl-alpha-D-muramoyl-L-alanyl-gamma-D-glutamyl-L-lysyl-D-alanyl-D-alanine + di-trans,octa-cis-undecaprenyl phosphate = Mur2Ac(oyl-L-Ala-gamma-D-Glu-L-Lys-D-Ala-D-Ala)-di-trans,octa-cis-undecaprenyl diphosphate + UMP. It participates in cell wall biogenesis; peptidoglycan biosynthesis. Its function is as follows. Catalyzes the initial step of the lipid cycle reactions in the biosynthesis of the cell wall peptidoglycan: transfers peptidoglycan precursor phospho-MurNAc-pentapeptide from UDP-MurNAc-pentapeptide onto the lipid carrier undecaprenyl phosphate, yielding undecaprenyl-pyrophosphoryl-MurNAc-pentapeptide, known as lipid I. The polypeptide is Phospho-N-acetylmuramoyl-pentapeptide-transferase (Streptococcus equi subsp. zooepidemicus (strain MGCS10565)).